Consider the following 72-residue polypeptide: Phosphonoacetate hydrolase (72 aa).

In terms of assembly, monomer. Requires Unlike bacterial phosphonoacetate hydrolase, does not require zinc as a cofactor. as cofactor.

It carries out the reaction phosphonoacetate + H2O = acetate + phosphate + H(+). Its activity is regulated as follows. Unaffected by EDTA or Ca(2+), Co(2+), Cu(2+), Mg(2+), Mn(2+), Ni(2+) and Zn(2+). The protein is Phosphonoacetate hydrolase of Penicillium oxalicum.